Here is a 151-residue protein sequence, read N- to C-terminus: uncharacterized protein (151 aa).

BON domains lie at 2-68 and 78-146; these read DDAA…AVDK and IDSA…RLKH.

This is an uncharacterized protein from Anaplasma centrale.